We begin with the raw amino-acid sequence, 188 residues long: PRA1 family protein 3 (188 aa).

M1 carries the post-translational modification N-acetylmethionine. Residues 1-35 are Cytoplasmic-facing; the sequence is MDVNIAPLRAWDDFFPGSDRFARPDFRDISKWNNR. The next 2 helical transmembrane spans lie at 36–56 and 57–77; these read VVSN…MMIS and VVGF…VLVF. The Cytoplasmic segment spans residues 78-93; sequence TGFVWAAHNKDILRRM. 2 consecutive transmembrane segments (helical) span residues 94–114 and 115–135; these read KKQY…FLIS and LFGG…LMFI. The segment at 103–117 is required for homodimer formation and heterodimer formation with ARL6IP1; it reads MVVMLASYFLISLFG. Residues 136 to 188 lie on the Cytoplasmic side of the membrane; the sequence is HASLRLRNLKNKLENKMEEIGLKRTPMGIVLDALEQQEETITKFSDYISKMKE. The segment at 136–188 is targeting to endoplasmic reticulum membrane; sequence HASLRLRNLKNKLENKMEEIGLKRTPMGIVLDALEQQEETITKFSDYISKMKE.

Belongs to the PRA1 family. As to quaternary structure, homodimer. Heterodimer with ARL6IP1. Forms multimers. Interacts with ARL6. Interacts with prenylated RAB1A and RAB3A. Interacts with SLC1A1/EAAC1. Interacts with RTN2 (via first transmembrane domain). Does not interact with VAMP1, VAMP2 or VAMP3.

It is found in the endoplasmic reticulum membrane. The protein resides in the cell membrane. It localises to the cytoplasm. Its subcellular location is the cytoskeleton. Regulates intracellular concentrations of taurine and glutamate. Negatively modulates SLC1A1/EAAC1 glutamate transport activity by decreasing its affinity for glutamate in a PKC activity-dependent manner. Plays a role in the retention of SLC1A1/EAAC1 in the endoplasmic reticulum. In Bos taurus (Bovine), this protein is PRA1 family protein 3 (ARL6IP5).